Reading from the N-terminus, the 176-residue chain is Peptidyl-prolyl cis-trans isomerase CYP19-3 (176 aa).

Positions 7 to 170 constitute a PPIase cyclophilin-type domain; it reads FFDILIGKMK…ERVVIEDCGE (164 aa).

Belongs to the cyclophilin-type PPIase family. Ubiquitous, with highest levels in flowers and lowest levels in roots.

It is found in the cytoplasm. It catalyses the reaction [protein]-peptidylproline (omega=180) = [protein]-peptidylproline (omega=0). Binds cyclosporin A (CsA). CsA mediates some of its effects via an inhibitory action on PPIase. In terms of biological role, PPIases accelerate the folding of proteins. It catalyzes the cis-trans isomerization of proline imidic peptide bonds in oligopeptides. The sequence is that of Peptidyl-prolyl cis-trans isomerase CYP19-3 (CYP19-3) from Arabidopsis thaliana (Mouse-ear cress).